A 439-amino-acid polypeptide reads, in one-letter code: 23S rRNA (uracil(1939)-C(5))-methyltransferase RlmD (439 aa).

Residues 1–54 (MTAPVLIESLDQEGRGVAHAEGKVIFIEGALPGEVVTYNAYRRKPSFELAQVGQ) enclose the TRAM domain. The [4Fe-4S] cluster site is built by Cys67, Cys73, Cys76, and Cys155. 6 residues coordinate S-adenosyl-L-methionine: Gln264, Phe293, Asn298, Glu314, Asn342, and Asp363. Cys391 acts as the Nucleophile in catalysis.

Belongs to the class I-like SAM-binding methyltransferase superfamily. RNA M5U methyltransferase family. RlmD subfamily.

It carries out the reaction uridine(1939) in 23S rRNA + S-adenosyl-L-methionine = 5-methyluridine(1939) in 23S rRNA + S-adenosyl-L-homocysteine + H(+). Its function is as follows. Catalyzes the formation of 5-methyl-uridine at position 1939 (m5U1939) in 23S rRNA. The chain is 23S rRNA (uracil(1939)-C(5))-methyltransferase RlmD from Nitrosospira multiformis (strain ATCC 25196 / NCIMB 11849 / C 71).